Consider the following 454-residue polypeptide: MDRRIFGLENEYGVTCVFRGQRRLSPDEVARYLFRRVVSWGRSSNVFLKNGARLYLDVGSHPEYATPECDSVPDLVTHDKAGERILEGLLVEAERRLREEGIAGDIHLFKNNTDSAGNSYGCHENYLVGRHGEFSKLADVLVPFLVSRQILCGAGKVLQTPRGAVYCISQRAEHIWESVSSATTRSRPIINTRDEPHADAERFRRLHVIVGDSNMSETTMLLKLGATDLVLRMIEAGVMLRDMTLENPIRAIREVSHDMTCQRRIKLANGREVSALDIQWEYHSKAVEFVERRGGDGDEVAKRVLDLWGRTLLAIETDDLELVAREIDWVTKYVLIERFRHKHGLSLASPRVAELDLKYHDIHRDRGLYYRMERAGLVERVTRDLDVFEAKSRPPQTTRARLRGEFIKRAQEKRRDFTVDWVHLKLNDQAQRTVLCKDPFRSVDDRVDKLIASM.

Glu9 serves as a coordination point for Mg(2+). An ATP-binding site is contributed by Arg53. Mg(2+) is bound at residue Tyr55. Residue Asp57 is the Proton acceptor of the active site. Glu63 lines the Mg(2+) pocket. Positions 66 and 421 each coordinate ATP.

Belongs to the Pup ligase/Pup deamidase family. Pup-conjugating enzyme subfamily.

It catalyses the reaction ATP + [prokaryotic ubiquitin-like protein]-L-glutamate + [protein]-L-lysine = ADP + phosphate + N(6)-([prokaryotic ubiquitin-like protein]-gamma-L-glutamyl)-[protein]-L-lysine.. Its pathway is protein degradation; proteasomal Pup-dependent pathway. It participates in protein modification; protein pupylation. In terms of biological role, catalyzes the covalent attachment of the prokaryotic ubiquitin-like protein modifier Pup to the proteasomal substrate proteins, thereby targeting them for proteasomal degradation. This tagging system is termed pupylation. The ligation reaction involves the side-chain carboxylate of the C-terminal glutamate of Pup and the side-chain amino group of a substrate lysine. This Frankia casuarinae (strain DSM 45818 / CECT 9043 / HFP020203 / CcI3) protein is Pup--protein ligase.